The primary structure comprises 47 residues: uncharacterized protein (47 aa).

A helical membrane pass occupies residues 28-45 (VMIWGCLPYFLYVLIRMF).

It localises to the cell membrane. This is an uncharacterized protein from Bacillus subtilis (strain 168).